A 220-amino-acid chain; its full sequence is Iron-sulfur cluster repair protein YtfE (220 aa).

This sequence belongs to the RIC family. YtfE subfamily. In terms of assembly, homodimer.

The protein localises to the cytoplasm. In terms of biological role, di-iron-containing protein involved in the repair of iron-sulfur clusters damaged by oxidative and nitrosative stress conditions. The chain is Iron-sulfur cluster repair protein YtfE from Salmonella schwarzengrund (strain CVM19633).